A 384-amino-acid chain; its full sequence is Outer membrane protein assembly factor BamB (384 aa).

Positions 1 to 16 (MKIRILVLILCALTQG) are cleaved as a signal peptide. Cysteine 17 is lipidated: N-palmitoyl cysteine. Cysteine 17 is lipidated: S-diacylglycerol cysteine.

Belongs to the BamB family. In terms of assembly, part of the Bam complex.

Its subcellular location is the cell outer membrane. Functionally, part of the outer membrane protein assembly complex, which is involved in assembly and insertion of beta-barrel proteins into the outer membrane. In Legionella pneumophila (strain Paris), this protein is Outer membrane protein assembly factor BamB.